Consider the following 267-residue polypeptide: Indole-3-glycerol phosphate synthase (267 aa).

It belongs to the TrpC family.

It carries out the reaction 1-(2-carboxyphenylamino)-1-deoxy-D-ribulose 5-phosphate + H(+) = (1S,2R)-1-C-(indol-3-yl)glycerol 3-phosphate + CO2 + H2O. It functions in the pathway amino-acid biosynthesis; L-tryptophan biosynthesis; L-tryptophan from chorismate: step 4/5. The chain is Indole-3-glycerol phosphate synthase from Cupriavidus pinatubonensis (strain JMP 134 / LMG 1197) (Cupriavidus necator (strain JMP 134)).